Here is a 43-residue protein sequence, read N- to C-terminus: Defensin, isoforms B and C (43 aa).

Disulfide bonds link Cys3–Cys34, Cys20–Cys40, and Cys24–Cys42.

This sequence belongs to the invertebrate defensin family. Type 1 subfamily.

The protein resides in the secreted. In terms of biological role, involved in anti Gram-positive activity of immune hemolymph of Z.atratus. This chain is Defensin, isoforms B and C, found in Zophobas atratus (Giant mealworm beetle).